A 335-amino-acid polypeptide reads, in one-letter code: Methionine import ATP-binding protein MetN (335 aa).

Positions 2–241 (IQFQRLHKSY…PKHATTRRFV (240 aa)) constitute an ABC transporter domain. 38–45 (GHSGAGKS) serves as a coordination point for ATP.

This sequence belongs to the ABC transporter superfamily. Methionine importer (TC 3.A.1.24) family. As to quaternary structure, the complex is composed of two ATP-binding proteins (MetN), two transmembrane proteins (MetI) and a solute-binding protein (MetQ).

It localises to the cell inner membrane. It carries out the reaction L-methionine(out) + ATP + H2O = L-methionine(in) + ADP + phosphate + H(+). The enzyme catalyses D-methionine(out) + ATP + H2O = D-methionine(in) + ADP + phosphate + H(+). Functionally, part of the ABC transporter complex MetNIQ involved in methionine import. Responsible for energy coupling to the transport system. This is Methionine import ATP-binding protein MetN from Xanthomonas axonopodis pv. citri (strain 306).